Consider the following 259-residue polypeptide: Type III pantothenate kinase (259 aa).

6–13 contributes to the ATP binding site; sequence DCGNTNTV. 107-110 provides a ligand contact to substrate; sequence GPDR. The active-site Proton acceptor is Asp109. Asp129 is a K(+) binding site. Residue Thr132 participates in ATP binding. Thr184 is a substrate binding site.

It belongs to the type III pantothenate kinase family. As to quaternary structure, homodimer. NH4(+) serves as cofactor. The cofactor is K(+).

The protein localises to the cytoplasm. It catalyses the reaction (R)-pantothenate + ATP = (R)-4'-phosphopantothenate + ADP + H(+). It functions in the pathway cofactor biosynthesis; coenzyme A biosynthesis; CoA from (R)-pantothenate: step 1/5. In terms of biological role, catalyzes the phosphorylation of pantothenate (Pan), the first step in CoA biosynthesis. This is Type III pantothenate kinase from Jannaschia sp. (strain CCS1).